Reading from the N-terminus, the 208-residue chain is MDFYYLPGSAPCRSVLMTAKALGIELNKKLLNLQAGEHLKPEFLKINPQHTIPTLVDGDFALWESRAIMVYLVEKYGKTDSLFPKCPKKRAVINQRLYFDMGTLYKSFADYYYPQIFAKAPADPELFKKIETAFDFLNTFLKGHEYAAGDSLTVADLALLASVSTFEVASFDFSKYPNVAKWYANLKTVAPGWEENWAGCLEFKKYFG.

Positions 1–80 constitute a GST N-terminal domain; that stretch reads MDFYYLPGSA…YLVEKYGKTD (80 aa). Glutathione-binding positions include S9, 50-52, and 64-66; these read HTI and ESR. The 122-residue stretch at 86–207 folds into the GST C-terminal domain; the sequence is CPKKRAVINQ…AGCLEFKKYF (122 aa).

This sequence belongs to the GST superfamily. Theta family. As to quaternary structure, homodimer.

It catalyses the reaction RX + glutathione = an S-substituted glutathione + a halide anion + H(+). Its function is as follows. Conjugation of reduced glutathione to a wide number of exogenous and endogenous hydrophobic electrophiles. This Musca domestica (House fly) protein is Glutathione S-transferase 1 (Gst1).